The chain runs to 414 residues: Serine hydroxymethyltransferase (414 aa).

Residues Leu117 and 121–123 (GHL) contribute to the (6S)-5,6,7,8-tetrahydrofolate site. Position 226 is an N6-(pyridoxal phosphate)lysine (Lys226). 349-351 (SPF) lines the (6S)-5,6,7,8-tetrahydrofolate pocket.

Belongs to the SHMT family. As to quaternary structure, homodimer. Pyridoxal 5'-phosphate serves as cofactor.

It localises to the cytoplasm. The catalysed reaction is (6R)-5,10-methylene-5,6,7,8-tetrahydrofolate + glycine + H2O = (6S)-5,6,7,8-tetrahydrofolate + L-serine. It functions in the pathway one-carbon metabolism; tetrahydrofolate interconversion. It participates in amino-acid biosynthesis; glycine biosynthesis; glycine from L-serine: step 1/1. In terms of biological role, catalyzes the reversible interconversion of serine and glycine with tetrahydrofolate (THF) serving as the one-carbon carrier. Also exhibits THF-independent aldolase activity toward beta-hydroxyamino acids, producing glycine and aldehydes, via a retro-aldol mechanism. This is Serine hydroxymethyltransferase from Methanospirillum hungatei JF-1 (strain ATCC 27890 / DSM 864 / NBRC 100397 / JF-1).